The primary structure comprises 300 residues: B3 domain-containing protein At5g57720 (300 aa).

A DNA-binding region (TF-B3) is located at residues 11-105 (PDFLKIFNSH…SFWVRIHRNG (95 aa)). Residues 115 to 142 (KIQEISDDEDETNGDGDPHMEEEGDTDE) are disordered. Residues 119-129 (ISDDEDETNGD) are compositionally biased toward acidic residues.

The protein resides in the nucleus. This Arabidopsis thaliana (Mouse-ear cress) protein is B3 domain-containing protein At5g57720.